A 497-amino-acid chain; its full sequence is Serine carboxypeptidase-like 20 (497 aa).

The N-terminal stretch at 1-29 (MSIITMVWLMKVFVFVTLLSLVFVITESA) is a signal peptide. 3 cysteine pairs are disulfide-bonded: cysteine 90–cysteine 386, cysteine 254–cysteine 266, and cysteine 289–cysteine 353. N-linked (GlcNAc...) asparagine glycans are attached at residues asparagine 111 and asparagine 146. Serine 186 is an active-site residue. N-linked (GlcNAc...) asparagine glycosylation occurs at asparagine 249. The N-linked (GlcNAc...) asparagine glycan is linked to asparagine 405. Aspartate 421 is an active-site residue. Residue asparagine 463 is glycosylated (N-linked (GlcNAc...) asparagine). Residue histidine 474 is part of the active site. The Microbody targeting signal signature appears at 495–497 (SKI).

This sequence belongs to the peptidase S10 family. In terms of tissue distribution, ubiquitous.

Its subcellular location is the secreted. Functionally, probable carboxypeptidase. This is Serine carboxypeptidase-like 20 (SCPL20) from Arabidopsis thaliana (Mouse-ear cress).